Consider the following 310-residue polypeptide: Transcription initiation factor IIB (310 aa).

The segment at 9 to 41 (DKQTVCPECGSTELIGDYERAEVVCAHCGLVID) adopts a TFIIB-type zinc-finger fold. Residues Cys-14, Cys-17, Cys-33, and Cys-36 each contribute to the Zn(2+) site. Repeat copies occupy residues 127–210 (SELD…TREL) and 221–302 (DYVP…ELTE).

The protein belongs to the TFIIB family.

In terms of biological role, stabilizes TBP binding to an archaeal box-A promoter. Also responsible for recruiting RNA polymerase II to the pre-initiation complex (DNA-TBP-TFIIB). In Methanobrevibacter smithii (strain ATCC 35061 / DSM 861 / OCM 144 / PS), this protein is Transcription initiation factor IIB.